The chain runs to 512 residues: Glycerol kinase, glycosomal (512 aa).

Thr11 is a binding site for substrate. Arg15 is an ATP binding site. Residues Arg84, Tyr139, and Asp254 each coordinate substrate. Residues Thr276, Gly321, and 422 to 426 each bind ATP; that span reads GLSKN. The short motif at 510-512 is the Microbody targeting signal element; it reads AKL.

It belongs to the FGGY kinase family.

The protein localises to the glycosome. The enzyme catalyses glycerol + ATP = sn-glycerol 3-phosphate + ADP + H(+). Its pathway is polyol metabolism; glycerol degradation via glycerol kinase pathway; sn-glycerol 3-phosphate from glycerol: step 1/1. Functionally, catalyzes the phosphorylation of glycerol using ATP. Under anoxic conditions, when glycerol 3-phosphate accumulates in the glycosome, it catalyzes the reverse reaction, maintaining the ATP balance. Key enzyme for the survival of bloodstream forms under anoxic conditions. In Trypanosoma brucei brucei, this protein is Glycerol kinase, glycosomal (GK).